The following is a 297-amino-acid chain: Acetyl-coenzyme A carboxylase carboxyl transferase subunit beta (297 aa).

The region spanning 27-296 (LWHKCPSCEA…PEAAKEVAAV (270 aa)) is the CoA carboxyltransferase N-terminal domain. The Zn(2+) site is built by cysteine 31, cysteine 34, cysteine 50, and cysteine 53. Residues 31-53 (CPSCEAVLYRPELEKTLDVCPKC) form a C4-type zinc finger.

This sequence belongs to the AccD/PCCB family. Acetyl-CoA carboxylase is a heterohexamer composed of biotin carboxyl carrier protein (AccB), biotin carboxylase (AccC) and two subunits each of ACCase subunit alpha (AccA) and ACCase subunit beta (AccD). The cofactor is Zn(2+).

It is found in the cytoplasm. The enzyme catalyses N(6)-carboxybiotinyl-L-lysyl-[protein] + acetyl-CoA = N(6)-biotinyl-L-lysyl-[protein] + malonyl-CoA. It functions in the pathway lipid metabolism; malonyl-CoA biosynthesis; malonyl-CoA from acetyl-CoA: step 1/1. Functionally, component of the acetyl coenzyme A carboxylase (ACC) complex. Biotin carboxylase (BC) catalyzes the carboxylation of biotin on its carrier protein (BCCP) and then the CO(2) group is transferred by the transcarboxylase to acetyl-CoA to form malonyl-CoA. The chain is Acetyl-coenzyme A carboxylase carboxyl transferase subunit beta from Pseudomonas entomophila (strain L48).